The chain runs to 502 residues: Probable malate:quinone oxidoreductase (502 aa).

This sequence belongs to the MQO family. It depends on FAD as a cofactor.

The catalysed reaction is (S)-malate + a quinone = a quinol + oxaloacetate. It participates in carbohydrate metabolism; tricarboxylic acid cycle; oxaloacetate from (S)-malate (quinone route): step 1/1. This Parasynechococcus marenigrum (strain WH8102) protein is Probable malate:quinone oxidoreductase.